A 337-amino-acid polypeptide reads, in one-letter code: G-protein coupled receptor 26 (337 aa).

The Extracellular segment spans residues 1-10; the sequence is MNSWDAGLAG. A helical membrane pass occupies residues 11 to 31; that stretch reads LLVGTIGVSLLSNGLVLLCLL. The Cytoplasmic segment spans residues 32–47; that stretch reads HSADIRRQAPALFTLN. A helical membrane pass occupies residues 48-68; that stretch reads LTCGNLLCTVVNMPLTLAGVV. Over 69–81 the chain is Extracellular; that stretch reads AQRQPAGDRLCRL. An intrachain disulfide couples cysteine 79 to cysteine 156. The helical transmembrane segment at 82 to 102 threads the bilayer; the sequence is AAFLDTFLAANSMLSMAALSI. Residues 103-123 are Cytoplasmic-facing; that stretch reads DRWVAVVFPLSYRAKMRLRDA. Residues 124 to 144 traverse the membrane as a helical segment; the sequence is AFMVAYTWLHALTFPATALAL. Residues 145-168 are Extracellular-facing; the sequence is SWLGFHQLYASCTLCSRRPDERLR. A helical transmembrane segment spans residues 169–189; it reads FAVFTSAFHALSFLLSFIVLC. Over 190–245 the chain is Cytoplasmic; it reads FTYLKVLKVARFHCKRIDVITMQTLVLLVDIHPSVRERCLEEQKRRRQRATKKIST. A helical transmembrane segment spans residues 246 to 266; it reads FIGTFLVCFAPYVITRLVELF. Residues 267-276 lie on the Extracellular side of the membrane; the sequence is STAPIGSHWG. Residues 277–297 form a helical membrane-spanning segment; it reads VLSKCLAYSKAASDPFVYSLL. Residues 298 to 337 lie on the Cytoplasmic side of the membrane; that stretch reads RHQYRRSCKELLNRIFNRRSLHSVGLTGDSHSQNILPVSE.

This sequence belongs to the G-protein coupled receptor 1 family. In terms of tissue distribution, exclusively expressed in the brain. Prominent expression is detected throughout the entire neocortex at all rostrocaudal and dorsoventral levels. Strong expression is detected in olfactory and auditory sensory areas.

It is found in the cell membrane. Its function is as follows. Orphan receptor. Displays a significant level of constitutive activity. Its effect is mediated by G(s)-alpha protein that stimulate adenylate cyclase, resulting in an elevation of intracellular cAMP. The sequence is that of G-protein coupled receptor 26 (Gpr26) from Mus musculus (Mouse).